Here is an 808-residue protein sequence, read N- to C-terminus: MNFNGFLDDGAGASKLLSDAPYNNHFSFSAVDTMLGSAAIAPSQSLPFSSSGLSLGLQTNGEMSRNGEIMESNVSRKSSRGEDVESRSESDNAEAVSGDDLDTSDRPLKKKKRYHRHTPKQIQDLESVFKECAHPDEKQRLDLSRRLNLDPRQVKFWFQNRRTQMKTQIERHENALLRQENDKLRAENMSVREAMRNPMCGNCGGPAVIGEISMEEQHLRIENSRLKDELDRVCALTGKFLGRSNGSHHIPDSALVLGVGVGSGGCNVGGGFTLSSPLLPQASPRFEISNGTGSGLVATVNRQQPVSVSDFDQRSRYLDLALAAMDELVKMAQTREPLWVRSSDSGFEVLNQEEYDTSFSRCVGPKQDGFVSEASKEAGTVIINSLALVETLMDSERWAEMFPSMVSRTSTTEIISSGMGGRNGALHLMHAELQLLSPLVPVRQVSFLRFCKQHAEGVWAVVDVSIDSIREGSSSSCRRLPSGCLVQDMANGYSKVTWIEHTEYDENHIHRLYRPLLRCGLAFGAHRWMAALQRQCECLTILMSSTVSTSTNPSPINCNGRKSMLKLAKRMTDNFCGGVCASSLQKWSKLNVGNVDEDVRIMTRKSVNNPGEPPGIILNAATSVWMPVSPRRLFDFLGNERLRSEWDILSNGGPMKEMAHIAKGHDRSNSVSLLRASAINANQSSMLILQETSIDAAGAVVVYAPVDIPAMQAVMNGGDSAYVALLPSGFAILPNGQAGTQRCAAEERNSIGNGGCMEEGGSLLTVAFQILVNSLPTAKLTVESVETVNNLISCTVQKIKAALHCDST.

Residues 57–121 form a disordered region; that stretch reads LQTNGEMSRN…KRYHRHTPKQ (65 aa). A compositionally biased stretch (basic and acidic residues) spans 79–90; it reads SRGEDVESRSES. A compositionally biased stretch (basic residues) spans 108–119; sequence LKKKKRYHRHTP. Positions 110 to 169 form a DNA-binding region, homeobox; that stretch reads KKKRYHRHTPKQIQDLESVFKECAHPDEKQRLDLSRRLNLDPRQVKFWFQNRRTQMKTQI. Residues 158-233 are a coiled coil; the sequence is FQNRRTQMKT…SRLKDELDRV (76 aa). One can recognise an START domain in the interval 310–541; the sequence is DFDQRSRYLD…LQRQCECLTI (232 aa).

It belongs to the HD-ZIP homeobox family. Class IV subfamily. Interacts with CFL1. Binds with BBM. As to expression, expressed in trichomes forming at the base of young leaves, in endodermal cell lines around emergent lateral roots and in the epidermal layer of the stamen filament.

The protein resides in the nucleus. In terms of biological role, probable transcription factor. Promotes cuticle development probably by modulating the expression of the downstream genes BDG and FDH, possibly repressed in a CFL1-dependent manner. Involved, together with PDF2, in the regulation of flower organs development by promoting the expression of APETALA 3 (AP3) in the epidermis and internal cell layers of developing flowers. In opposition to BBM, seems to promote cell differentiation and giant cell identity via transcriptional repression of meristem and cell proliferation genes. The protein is Homeobox-leucine zipper protein HDG1 of Arabidopsis thaliana (Mouse-ear cress).